The sequence spans 288 residues: 2-dehydro-3-deoxyphosphooctonate aldolase (288 aa).

Belongs to the KdsA family.

The protein resides in the cytoplasm. It catalyses the reaction D-arabinose 5-phosphate + phosphoenolpyruvate + H2O = 3-deoxy-alpha-D-manno-2-octulosonate-8-phosphate + phosphate. The protein operates within carbohydrate biosynthesis; 3-deoxy-D-manno-octulosonate biosynthesis; 3-deoxy-D-manno-octulosonate from D-ribulose 5-phosphate: step 2/3. It participates in bacterial outer membrane biogenesis; lipopolysaccharide biosynthesis. In Bdellovibrio bacteriovorus (strain ATCC 15356 / DSM 50701 / NCIMB 9529 / HD100), this protein is 2-dehydro-3-deoxyphosphooctonate aldolase.